Reading from the N-terminus, the 472-residue chain is Aspartyl/glutamyl-tRNA(Asn/Gln) amidotransferase subunit B (472 aa).

This sequence belongs to the GatB/GatE family. GatB subfamily. Heterotrimer of A, B and C subunits.

The enzyme catalyses L-glutamyl-tRNA(Gln) + L-glutamine + ATP + H2O = L-glutaminyl-tRNA(Gln) + L-glutamate + ADP + phosphate + H(+). It catalyses the reaction L-aspartyl-tRNA(Asn) + L-glutamine + ATP + H2O = L-asparaginyl-tRNA(Asn) + L-glutamate + ADP + phosphate + 2 H(+). Functionally, allows the formation of correctly charged Asn-tRNA(Asn) or Gln-tRNA(Gln) through the transamidation of misacylated Asp-tRNA(Asn) or Glu-tRNA(Gln) in organisms which lack either or both of asparaginyl-tRNA or glutaminyl-tRNA synthetases. The reaction takes place in the presence of glutamine and ATP through an activated phospho-Asp-tRNA(Asn) or phospho-Glu-tRNA(Gln). This Campylobacter jejuni (strain RM1221) protein is Aspartyl/glutamyl-tRNA(Asn/Gln) amidotransferase subunit B.